The primary structure comprises 331 residues: DNA-directed RNA polymerase subunit alpha (331 aa).

The tract at residues 1 to 225 (MLDIAMPKLE…QYSSIIADFN (225 aa)) is alpha N-terminal domain (alpha-NTD). The interval 243-331 (PSEIYDMPIE…AARLNDGSAE (89 aa)) is alpha C-terminal domain (alpha-CTD).

This sequence belongs to the RNA polymerase alpha chain family. As to quaternary structure, homodimer. The RNAP catalytic core consists of 2 alpha, 1 beta, 1 beta' and 1 omega subunit. When a sigma factor is associated with the core the holoenzyme is formed, which can initiate transcription.

It carries out the reaction RNA(n) + a ribonucleoside 5'-triphosphate = RNA(n+1) + diphosphate. Its function is as follows. DNA-dependent RNA polymerase catalyzes the transcription of DNA into RNA using the four ribonucleoside triphosphates as substrates. The protein is DNA-directed RNA polymerase subunit alpha of Herpetosiphon aurantiacus (strain ATCC 23779 / DSM 785 / 114-95).